A 345-amino-acid polypeptide reads, in one-letter code: MTDKTSLSYKDAGVDIDAGNALVDRIKGVVKKTRRPEVMGGLGGFGALCALPQKYREPVLVSGTDGVGTKLRLAMDLKRHDTIGIDLVAMCVNDLVVQGAEPLFFLDYYATGKLDVDTAASVINGIAEGCLQSGCALVGGETAEMPGMYHGEDYDVAGFCVGVVEKSEIIDGSKVADGDVLVALASSGPHSNGYSLVRKIIEVSGVDPQTTDLDGKPLADHLLAPTRIYVKSVLDLIASVDVHAIAHLTGGGFWENIPRVLPDNTQAIIDESSWQWPSVFNWLQTAGNVSQHEMYRTFNCGVGMVIALPAAEADKAIALLNEKGENAWKIGYIKASDSEQRVVIA.

The protein belongs to the AIR synthase family.

Its subcellular location is the cytoplasm. It catalyses the reaction 2-formamido-N(1)-(5-O-phospho-beta-D-ribosyl)acetamidine + ATP = 5-amino-1-(5-phospho-beta-D-ribosyl)imidazole + ADP + phosphate + H(+). Its pathway is purine metabolism; IMP biosynthesis via de novo pathway; 5-amino-1-(5-phospho-D-ribosyl)imidazole from N(2)-formyl-N(1)-(5-phospho-D-ribosyl)glycinamide: step 2/2. The polypeptide is Phosphoribosylformylglycinamidine cyclo-ligase (Klebsiella pneumoniae (strain 342)).